A 282-amino-acid polypeptide reads, in one-letter code: Putative phosphoenolpyruvate synthase regulatory protein (282 aa).

161–168 (GVSRSGKT) serves as a coordination point for ADP.

It belongs to the pyruvate, phosphate/water dikinase regulatory protein family. PSRP subfamily.

The enzyme catalyses [pyruvate, water dikinase] + ADP = [pyruvate, water dikinase]-phosphate + AMP + H(+). The catalysed reaction is [pyruvate, water dikinase]-phosphate + phosphate + H(+) = [pyruvate, water dikinase] + diphosphate. Bifunctional serine/threonine kinase and phosphorylase involved in the regulation of the phosphoenolpyruvate synthase (PEPS) by catalyzing its phosphorylation/dephosphorylation. This chain is Putative phosphoenolpyruvate synthase regulatory protein, found in Janthinobacterium sp. (strain Marseille) (Minibacterium massiliensis).